We begin with the raw amino-acid sequence, 628 residues long: Probable alpha-L-arabinofuranosidase A (628 aa).

The N-terminal stretch at 1-25 (MVAFSTISGLGALSLLFSIIESVDG) is a signal peptide. Residues asparagine 36, asparagine 51, asparagine 74, asparagine 152, asparagine 164, asparagine 260, asparagine 359, asparagine 404, and asparagine 493 are each glycosylated (N-linked (GlcNAc...) asparagine).

Belongs to the glycosyl hydrolase 51 family.

The protein localises to the secreted. The catalysed reaction is Hydrolysis of terminal non-reducing alpha-L-arabinofuranoside residues in alpha-L-arabinosides.. It participates in glycan metabolism; L-arabinan degradation. Functionally, alpha-L-arabinofuranosidase involved in the degradation of arabinoxylan, a major component of plant hemicellulose. Acts only on small linear 1,5-alpha-linked L-arabinofuranosyl oligosaccharides. The polypeptide is Probable alpha-L-arabinofuranosidase A (abfA) (Aspergillus terreus (strain NIH 2624 / FGSC A1156)).